Consider the following 262-residue polypeptide: Glucosamine-6-phosphate deaminase (262 aa).

The active-site Proton acceptor; for enolization step is the Asp63. Asn129 acts as the For ring-opening step in catalysis. His131 (proton acceptor; for ring-opening step) is an active-site residue. Glu136 functions as the For ring-opening step in the catalytic mechanism.

This sequence belongs to the glucosamine/galactosamine-6-phosphate isomerase family. NagB subfamily.

The enzyme catalyses alpha-D-glucosamine 6-phosphate + H2O = beta-D-fructose 6-phosphate + NH4(+). It functions in the pathway amino-sugar metabolism; N-acetylneuraminate degradation; D-fructose 6-phosphate from N-acetylneuraminate: step 5/5. Functionally, catalyzes the reversible isomerization-deamination of glucosamine 6-phosphate (GlcN6P) to form fructose 6-phosphate (Fru6P) and ammonium ion. In Bacillus cereus (strain G9842), this protein is Glucosamine-6-phosphate deaminase.